A 337-amino-acid polypeptide reads, in one-letter code: Ketol-acid reductoisomerase (NADP(+)) (337 aa).

The 180-residue stretch at 1 to 180 (MQVYYDKDAD…GGTKGGVIET (180 aa)) folds into the KARI N-terminal Rossmann domain. NADP(+) is bound by residues 24 to 27 (YGSQ), Arg47, and Ser51. The active site involves His106. Gly132 contacts NADP(+). One can recognise a KARI C-terminal knotted domain in the interval 181 to 326 (TFREETETDL…AQLRAMMPWI (146 aa)). The Mg(2+) site is built by Asp189, Glu193, Glu225, and Glu229. Ser250 serves as a coordination point for substrate.

The protein belongs to the ketol-acid reductoisomerase family. Mg(2+) serves as cofactor.

The catalysed reaction is (2R)-2,3-dihydroxy-3-methylbutanoate + NADP(+) = (2S)-2-acetolactate + NADPH + H(+). The enzyme catalyses (2R,3R)-2,3-dihydroxy-3-methylpentanoate + NADP(+) = (S)-2-ethyl-2-hydroxy-3-oxobutanoate + NADPH + H(+). The protein operates within amino-acid biosynthesis; L-isoleucine biosynthesis; L-isoleucine from 2-oxobutanoate: step 2/4. It functions in the pathway amino-acid biosynthesis; L-valine biosynthesis; L-valine from pyruvate: step 2/4. In terms of biological role, involved in the biosynthesis of branched-chain amino acids (BCAA). Catalyzes an alkyl-migration followed by a ketol-acid reduction of (S)-2-acetolactate (S2AL) to yield (R)-2,3-dihydroxy-isovalerate. In the isomerase reaction, S2AL is rearranged via a Mg-dependent methyl migration to produce 3-hydroxy-3-methyl-2-ketobutyrate (HMKB). In the reductase reaction, this 2-ketoacid undergoes a metal-dependent reduction by NADPH to yield (R)-2,3-dihydroxy-isovalerate. The polypeptide is Ketol-acid reductoisomerase (NADP(+)) (Neisseria meningitidis serogroup C (strain 053442)).